A 282-amino-acid polypeptide reads, in one-letter code: MALKEYKPTSPARRHMTVADFAEITKAKPEKRLTKPVRKSGGRNAHGKVTTRHIGGGHKRRYRVIDWRRDKDGVPAKVAAIEYDPNRTARIALLHYLDGEKRYILAPVGVAVGDTLVSGADVDIRPGNALPVRTIPLGTVIHNVETAPGSGAKMIRTAGSFGQLMAKEGGYAQIRLPSGEVRKVLQDCKATIGQLGNVESSSVRVGKAGKSRWLGIRPTVRGLAMNPVDHPHGGGEGKSGQGNPHPVSPWGQKTKGLKTRNNRRTDKFIVTRRRPGVRNTQR.

Disordered stretches follow at residues 31–55 and 223–282; these read KRLT…RHIG and LAMN…NTQR. Basic residues-rich tracts occupy residues 34 to 55 and 270 to 282; these read TKPV…RHIG and VTRR…NTQR.

Belongs to the universal ribosomal protein uL2 family. Part of the 50S ribosomal subunit. Forms a bridge to the 30S subunit in the 70S ribosome.

Functionally, one of the primary rRNA binding proteins. Required for association of the 30S and 50S subunits to form the 70S ribosome, for tRNA binding and peptide bond formation. It has been suggested to have peptidyltransferase activity; this is somewhat controversial. Makes several contacts with the 16S rRNA in the 70S ribosome. This Anaeromyxobacter dehalogenans (strain 2CP-C) protein is Large ribosomal subunit protein uL2.